Consider the following 222-residue polypeptide: Small ribosomal subunit protein eS1 (222 aa).

This sequence belongs to the eukaryotic ribosomal protein eS1 family.

This chain is Small ribosomal subunit protein eS1, found in Pyrobaculum calidifontis (strain DSM 21063 / JCM 11548 / VA1).